The primary structure comprises 200 residues: GTP cyclohydrolase 1 (200 aa).

The Zn(2+) site is built by cysteine 87, histidine 90, and cysteine 158.

This sequence belongs to the GTP cyclohydrolase I family. In terms of assembly, toroid-shaped homodecamer, composed of two pentamers of five dimers.

The catalysed reaction is GTP + H2O = 7,8-dihydroneopterin 3'-triphosphate + formate + H(+). Its pathway is cofactor biosynthesis; 7,8-dihydroneopterin triphosphate biosynthesis; 7,8-dihydroneopterin triphosphate from GTP: step 1/1. The protein is GTP cyclohydrolase 1 of Xanthomonas euvesicatoria pv. vesicatoria (strain 85-10) (Xanthomonas campestris pv. vesicatoria).